The primary structure comprises 315 residues: Acetyl-coenzyme A carboxylase carboxyl transferase subunit alpha (315 aa).

The 262-residue stretch at 32-293 folds into the CoA carboxyltransferase C-terminal domain; it reads NISDEIARLQ…RADLVQQLDM (262 aa).

It belongs to the AccA family. In terms of assembly, acetyl-CoA carboxylase is a heterohexamer composed of biotin carboxyl carrier protein (AccB), biotin carboxylase (AccC) and two subunits each of ACCase subunit alpha (AccA) and ACCase subunit beta (AccD).

The protein localises to the cytoplasm. The catalysed reaction is N(6)-carboxybiotinyl-L-lysyl-[protein] + acetyl-CoA = N(6)-biotinyl-L-lysyl-[protein] + malonyl-CoA. The protein operates within lipid metabolism; malonyl-CoA biosynthesis; malonyl-CoA from acetyl-CoA: step 1/1. Its function is as follows. Component of the acetyl coenzyme A carboxylase (ACC) complex. First, biotin carboxylase catalyzes the carboxylation of biotin on its carrier protein (BCCP) and then the CO(2) group is transferred by the carboxyltransferase to acetyl-CoA to form malonyl-CoA. In Pseudomonas putida (strain ATCC 47054 / DSM 6125 / CFBP 8728 / NCIMB 11950 / KT2440), this protein is Acetyl-coenzyme A carboxylase carboxyl transferase subunit alpha.